We begin with the raw amino-acid sequence, 260 residues long: MSGVKDKMLVGERFRRALCSYPESAVVQEAMARELVSMVRLHAGEERLGRVLEIGAGSGLLTELLLEAFPVASLTANDLVGECREPLREIARRLRIAEFSFLKGDIEECGELPGSQDLVVSNATLQWLNDLDKLFAAVRRSLVPGKLFAFTSFTVGNMEEIAMLGGGGLSYRTTEEIGEIAGRHFELLELKESREQLTFSSPREVLGHIRQTGVNGLGGERWSRSRYLDFMENYSRLFRVQGGVSLTYRPLYCVLRRREL.

Belongs to the methyltransferase superfamily.

It catalyses the reaction malonyl-[ACP] + S-adenosyl-L-methionine = malonyl-[ACP] methyl ester + S-adenosyl-L-homocysteine. It functions in the pathway cofactor biosynthesis; biotin biosynthesis. Converts the free carboxyl group of a malonyl-thioester to its methyl ester by transfer of a methyl group from S-adenosyl-L-methionine (SAM). It allows to synthesize pimeloyl-ACP via the fatty acid synthetic pathway. The sequence is that of Malonyl-[acyl-carrier protein] O-methyltransferase from Chlorobium phaeovibrioides (strain DSM 265 / 1930) (Prosthecochloris vibrioformis (strain DSM 265)).